The sequence spans 226 residues: Putative N-acetylmannosamine-6-phosphate 2-epimerase 1 (226 aa).

This sequence belongs to the NanE family.

The catalysed reaction is an N-acyl-D-glucosamine 6-phosphate = an N-acyl-D-mannosamine 6-phosphate. The protein operates within amino-sugar metabolism; N-acetylneuraminate degradation; D-fructose 6-phosphate from N-acetylneuraminate: step 3/5. Its function is as follows. Converts N-acetylmannosamine-6-phosphate (ManNAc-6-P) to N-acetylglucosamine-6-phosphate (GlcNAc-6-P). This Salmonella typhimurium (strain LT2 / SGSC1412 / ATCC 700720) protein is Putative N-acetylmannosamine-6-phosphate 2-epimerase 1 (nanE1).